The chain runs to 37 residues: Large ribosomal subunit protein bL36 (37 aa).

The protein belongs to the bacterial ribosomal protein bL36 family.

In Deinococcus geothermalis (strain DSM 11300 / CIP 105573 / AG-3a), this protein is Large ribosomal subunit protein bL36.